A 505-amino-acid polypeptide reads, in one-letter code: DNA repair protein RadA (505 aa).

The segment at 10 to 27 (CSACGADHAQWFGRCPKC) adopts a C4-type zinc-finger fold. Residue 107–114 (GDPGIGKS) participates in ATP binding. Residues 281-285 (KNRFG) carry the RadA KNRFG motif motif. Positions 380–505 (DAYLSVAGGL…KIEEDLGKKD (126 aa)) are lon-protease-like. A disordered region spans residues 485 to 505 (NTTDQGNGSEAKIEEDLGKKD). Basic and acidic residues predominate over residues 495–505 (AKIEEDLGKKD).

This sequence belongs to the RecA family. RadA subfamily.

In terms of biological role, DNA-dependent ATPase involved in processing of recombination intermediates, plays a role in repairing DNA breaks. Stimulates the branch migration of RecA-mediated strand transfer reactions, allowing the 3' invading strand to extend heteroduplex DNA faster. Binds ssDNA in the presence of ADP but not other nucleotides, has ATPase activity that is stimulated by ssDNA and various branched DNA structures, but inhibited by SSB. Does not have RecA's homology-searching function. This Synechocystis sp. (strain ATCC 27184 / PCC 6803 / Kazusa) protein is DNA repair protein RadA.